The chain runs to 540 residues: uncharacterized protein (540 aa).

This is an uncharacterized protein from Escherichia coli (strain K12).